A 133-amino-acid polypeptide reads, in one-letter code: Ribonuclease P protein component (133 aa).

The tract at residues 114–133 is disordered; it reads RSRPTPEEKSEPAGVDSTDA.

This sequence belongs to the RnpA family. As to quaternary structure, consists of a catalytic RNA component (M1 or rnpB) and a protein subunit.

It catalyses the reaction Endonucleolytic cleavage of RNA, removing 5'-extranucleotides from tRNA precursor.. Functionally, RNaseP catalyzes the removal of the 5'-leader sequence from pre-tRNA to produce the mature 5'-terminus. It can also cleave other RNA substrates such as 4.5S RNA. The protein component plays an auxiliary but essential role in vivo by binding to the 5'-leader sequence and broadening the substrate specificity of the ribozyme. The sequence is that of Ribonuclease P protein component from Pseudomonas syringae pv. tomato (strain ATCC BAA-871 / DC3000).